The following is an 84-amino-acid chain: Beta/gamma-crystallin (84 aa).

Beta/gamma crystallin 'Greek key' domains are found at residues 2–42 and 43–84; these read GKII…IVES and GTWF…VKQQ. The segment at 64–84 is disordered; the sequence is KYPNPGSWGGNDDELSSVKQQ.

The protein belongs to the beta/gamma-crystallin family. As to quaternary structure, monomer. As to expression, palps of larvae and otolith of the light-sensing ocellus.

Its function is as follows. Structural component of the neuroectodermal visual system. The protein is Beta/gamma-crystallin of Ciona intestinalis (Transparent sea squirt).